Here is a 388-residue protein sequence, read N- to C-terminus: N-acetylneuraminate epimerase (388 aa).

Positions 1-26 (MFSLIRAKRLAIGIAALAWSTGAVMA) are cleaved as a signal peptide. Kelch repeat units follow at residues 48-92 (MAYV…AAAG), 94-147 (KIFA…VGLA), 149-186 (GRIAIFGGYNKELFDKYLADVGAIDKDKEPEAYRKLVD), 187-232 (SYMG…ATMG), 236-285 (FLLV…VAGA), 307-356 (ANAA…DAPG), and 358-387 (LLVVGGEDRDGKARKEVFLLKWDGKALSVE). The Proton acceptor role is filled by Glu242.

Belongs to the NanM family. Homodimer.

The protein resides in the periplasm. It carries out the reaction N-acetyl-alpha-neuraminate = N-acetyl-beta-neuraminate. In terms of biological role, converts alpha-N-acetylneuranimic acid (Neu5Ac) to the beta-anomer, accelerating the equilibrium between the alpha- and beta-anomers. Probably facilitates sialidase-negative bacteria to compete successfully for limited amounts of extracellular Neu5Ac, which is likely taken up in the beta-anomer. In addition, the rapid removal of sialic acid from solution might be advantageous to the bacterium to damp down host responses. The sequence is that of N-acetylneuraminate epimerase from Brucella melitensis biotype 1 (strain ATCC 23456 / CCUG 17765 / NCTC 10094 / 16M).